A 1024-amino-acid polypeptide reads, in one-letter code: NLR family CARD domain-containing protein 4 (1024 aa).

The CARD domain occupies 1 to 88; that stretch reads MNFIRNNRRA…FVYQDLTGQN (88 aa). The interval 95-298 is nucleotide-binding domain (NBD); it reads EEDLNVLAQN…HVGALTAEVG (204 aa). Residues Thr135, 172-177, and His443 contribute to the ATP site; that span reads GKGKST. Positions 163 to 476 constitute an NACHT domain; sequence SPCLIEGESG…VSKGNSYLNK (314 aa). The winged-helix domain (WHD) stretch occupies residues 356–463; sequence AHTQTMLFQT…RLSSLLTSKE (108 aa). Residue Ser533 is modified to Phosphoserine. LRR repeat units follow at residues 578–598, 656–679, 735–758, 762–785, 787–812, 824–847, 848–870, 878–902, 911–933, 936–963, 965–985, and 999–1021; these read FFQG…LFDF, KQEF…DIKY, VTGL…LIDS, LKNL…NLAE, LRSL…DYIV, EMKL…LHNL, IKLS…ALQE, LGEL…LLKQ, KLGL…FLEM, LRDL…VFEN, KQLV…ALVR, and EVKL…TFKL.

In terms of assembly, homooligomer; homooligomerizes following activation of Naip proteins by pathogenic proteins such as S.typhimurium (Salmonella) flagellin or PrgJ. Component of the NLRC4 inflammasome, at least composed of NLRC4, caspase-1 (CASP1) and some NAIP protein (Naip, Naip2 or Naip5). Interacts with Naip5 and Naip6; following Naip5 and Naip6 engagement by Salmonella flagellin. Interacts with Naip2; following Naip2 engagement by Salmonella PrgJ. The inflammasome is a huge complex that contains multiple copies of NLRC4 and a single Naip protein chain. Some NLRC4 inflammasomes contain PYCARD/ASC, while some others directly contact and activate CASP1. Interacts with EIF2AK2/PKR. In terms of processing, phosphorylated at Ser-533 following infection of macrophages with S.typhimurium (Salmonella). Phosphorylation is essential for NLRC4 inflammasome function to promote caspase-1 activation and pyroptosis. PRKCD phosphorylates Ser-533 in vitro. Expressed by intestinal mononuclear phagocytes.

Its subcellular location is the cytoplasm. The protein localises to the cytosol. The protein resides in the inflammasome. In terms of biological role, key component of inflammasomes that indirectly senses specific proteins from pathogenic bacteria and fungi and responds by assembling an inflammasome complex that promotes caspase-1 activation, cytokine production and macrophage pyroptosis. The NLRC4 inflammasome is activated as part of the innate immune response to a range of intracellular bacteria. It senses pathogenic proteins of the type III secretion system (T3SS) and type IV secretion system (T4SS) such as flagellin and PrgJ-like rod proteins via the Naip proteins (Naip1, Naip2 or Naip5): specific Naip proteins recognize and bind pathogenic proteins, driving assembly and activation of the NLRC4 inflammasome. The NLRC4 inflammasome senses Gram-negative bacteria such as L.pneumophila and P.aeruginosa, enteric pathogens S.typhimurium (Salmonella) and S.flexneri and fungal pathogen C.albicans. In intestine, the NLRC4 inflammasome is able to discriminate between commensal and pathogenic bacteria and specifically drives production of interleukin-1 beta (IL1B) in response to infection by Salmonella or P.aeruginosa. In case of L.pneumophila infection the inflammasome acts by activating caspase-7. In Mus musculus (Mouse), this protein is NLR family CARD domain-containing protein 4 (Nlrc4).